Here is a 147-residue protein sequence, read N- to C-terminus: Riboflavin kinase (147 aa).

15 to 20 (GLGEGR) contacts CDP. Mg(2+) is bound by residues T44 and N46. Positions 97 and 104 each coordinate FMN. A CDP-binding site is contributed by 109–112 (TELR).

The protein belongs to the archaeal riboflavin kinase family. Mg(2+) serves as cofactor.

It catalyses the reaction riboflavin + CTP = CDP + FMN + H(+). It functions in the pathway cofactor biosynthesis; FMN biosynthesis; FMN from riboflavin (CTP route): step 1/1. Catalyzes the CTP-dependent phosphorylation of riboflavin (vitamin B2) to form flavin mononucleotide (FMN). The protein is Riboflavin kinase of Methanopyrus kandleri (strain AV19 / DSM 6324 / JCM 9639 / NBRC 100938).